Here is a 389-residue protein sequence, read N- to C-terminus: Krueppel-like factor 17 (389 aa).

Disordered regions lie at residues 1–48 (MYGR…SGVH) and 239–279 (LVSQ…GSSE). Positions 26-38 (AQDNENSAPILNM) are enriched in polar residues. Over residues 264 to 278 (KNSRPQEGTGRRGSS) the composition is skewed to basic and acidic residues. 3 consecutive C2H2-type zinc fingers follow at residues 283-307 (YCCNYENCGKAYTKRSHLVSHQRKH), 313-337 (YSCNWESCSWSFFRSDELRRHMRVH), and 343-365 (YKCDQCSREFMRSDHLKQHQKTH). The tract at residues 356–389 (DHLKQHQKTHRPGPSDPQANNNNGEQDSPPAAGP) is disordered. Residues 372–381 (PQANNNNGEQ) are compositionally biased toward polar residues.

Belongs to the Sp1 C2H2-type zinc-finger protein family.

Its subcellular location is the nucleus. Functionally, transcription repressor that binds to the promoter of target genes and prevents their expression. Acts as a negative regulator of epithelial-mesenchymal transition and metastasis in breast cancer. Specifically binds the 5'-CACCC-3' sequence in the promoter of ID1, a key metastasis regulator in breast cancer, and repress its expression. May be a germ cell-specific transcription factor that plays important roles in spermatid differentiation and oocyte development. The protein is Krueppel-like factor 17 (KLF17) of Homo sapiens (Human).